Reading from the N-terminus, the 39-residue chain is Photosystem II reaction center protein Y (39 aa).

A helical membrane pass occupies residues 5-23 (VLIVLTPLLIAGGWAVFNI).

It belongs to the PsbY family. In terms of assembly, PSII is composed of 1 copy each of membrane proteins PsbA, PsbB, PsbC, PsbD, PsbE, PsbF, PsbH, PsbI, PsbJ, PsbK, PsbL, PsbM, PsbT, PsbX, PsbY, PsbZ, Psb30/Ycf12, peripheral proteins PsbO, CyanoQ (PsbQ), PsbU, PsbV and a large number of cofactors. It forms dimeric complexes.

Its subcellular location is the cellular thylakoid membrane. Its function is as follows. Loosely associated component of the core of photosystem II (PSII), it is not always seen in crystals. PSII is a light-driven water plastoquinone oxidoreductase, using light energy to abstract electrons from H(2)O, generating a proton gradient subsequently used for ATP formation. This Microcystis aeruginosa (strain NIES-843 / IAM M-2473) protein is Photosystem II reaction center protein Y.